A 543-amino-acid polypeptide reads, in one-letter code: Ribonuclease Y (543 aa).

A helical membrane pass occupies residues 4-24; that stretch reads IIMIPVATAIVSLLVGTVTGY. The KH domain maps to 233-296; the sequence is TVSVVDLPNE…EIAKRAMERL (64 aa). The 94-residue stretch at 359-452 folds into the HD domain; the sequence is VLSHSIEVGK…VVAADTISSA (94 aa).

Belongs to the RNase Y family.

The protein localises to the cell membrane. In terms of biological role, endoribonuclease that initiates mRNA decay. The polypeptide is Ribonuclease Y (Lactobacillus acidophilus (strain ATCC 700396 / NCK56 / N2 / NCFM)).